The chain runs to 202 residues: MSVQLEVKERAIRPRSLRNQLRHEGKVPAIVYGYQIESTPIYFEEKDLSKILREHGANTVIKMTVDGKNINTLMSKAQLDTFTGQMLHVEFLSVNMKETTEVEAEVQLIGESAGVKAGGTLAQNLYTVLVAATPDKLPESIEVDITNLEIGDALTIADLPEHKDYEILTDPEEQLVAIVEAQTAPEEEEGTAAETTEPELAE.

Positions 182–202 (QTAPEEEEGTAAETTEPELAE) are disordered. Over residues 185–202 (PEEEEGTAAETTEPELAE) the composition is skewed to acidic residues.

Belongs to the bacterial ribosomal protein bL25 family. CTC subfamily. As to quaternary structure, part of the 50S ribosomal subunit; part of the 5S rRNA/L5/L18/L25 subcomplex. Contacts the 5S rRNA. Binds to the 5S rRNA independently of L5 and L18.

Its function is as follows. This is one of the proteins that binds to the 5S RNA in the ribosome where it forms part of the central protuberance. This Enterococcus faecalis (strain ATCC 700802 / V583) protein is Large ribosomal subunit protein bL25.